An 83-amino-acid chain; its full sequence is MAARTVAVAAALAVLLIFAASSATVAMAGRPTPTTSLDEEAAQAAAQSEIGGGCKEGEGEEECLARRTLTAHTDYIYTQQHHN.

The N-terminal stretch at 1-28 is a signal peptide; it reads MAARTVAVAAALAVLLIFAASSATVAMA. The propeptide occupies 29 to 74; the sequence is GRPTPTTSLDEEAAQAAAQSEIGGGCKEGEGEEECLARRTLTAHTD. Residues Tyr75 and Tyr77 each carry the sulfotyrosine modification. The propeptide occupies 80–83; the sequence is QHHN.

The protein belongs to the phytosulfokine family. Post-translationally, sulfation is important for activity and for the binding to a putative membrane receptor. PSK-alpha is produced by endopeptidase digestion. PSK-beta is produced from PSK-alpha by exopeptidase digestion.

The protein resides in the secreted. Its function is as follows. Promotes plant cell differentiation, organogenesis and somatic embryogenesis as well as cell proliferation. The protein is Phytosulfokines 4 (PSK4) of Oryza sativa subsp. japonica (Rice).